The primary structure comprises 226 residues: MKAVIFDLDGVITDTAEYHFLAWKHIAEQIDIPFDRDMNERLKGISREESLESILIFGGAETKYTNAEKQELMHRKNRDYQMLISKLTPEDLLPGIGRLLCQLKNENIKIGLASSSRNAPKILRRLAIIDDFHAIVDPTTLAKGKPDPDIFLTAAAMLDVSPADCAAIEDAEAGISAIKSAGMFAVGVGQGQPMLGADLVVRQTSDLTLELLHEEWEQYRIRESIP.

Asp-7 (nucleophile) is an active-site residue. Mg(2+) is bound by residues Asp-7 and Asp-9. Residue Asp-7 is modified to 4-aspartylphosphate. Catalysis depends on Asp-9, which acts as the Proton donor/acceptor. Beta-D-glucose 6-phosphate-binding residues include Asp-9, Gly-44, Ile-45, Arg-47, Ser-116, Arg-117, and Asn-118. Residue Asp-170 participates in Mg(2+) binding.

Belongs to the HAD-like hydrolase superfamily. CbbY/CbbZ/Gph/YieH family. In terms of assembly, homodimer. Mg(2+) is required as a cofactor. Autophosphorylated.

Its subcellular location is the cytoplasm. It catalyses the reaction beta-D-glucose 1-phosphate = beta-D-glucose 6-phosphate. In terms of biological role, catalyzes the interconversion of D-glucose 1-phosphate (G1P) and D-glucose 6-phosphate (G6P), forming beta-D-glucose 1,6-(bis)phosphate (beta-G16P) as an intermediate. In Bacillus subtilis (strain 168), this protein is Beta-phosphoglucomutase (yvdM).